A 235-amino-acid chain; its full sequence is NADH-quinone oxidoreductase subunit C (235 aa).

The protein belongs to the complex I 30 kDa subunit family. NDH-1 is composed of 14 different subunits. Subunits NuoB, C, D, E, F, and G constitute the peripheral sector of the complex.

The protein resides in the cell membrane. The enzyme catalyses a quinone + NADH + 5 H(+)(in) = a quinol + NAD(+) + 4 H(+)(out). Functionally, NDH-1 shuttles electrons from NADH, via FMN and iron-sulfur (Fe-S) centers, to quinones in the respiratory chain. The immediate electron acceptor for the enzyme in this species is believed to be a menaquinone. Couples the redox reaction to proton translocation (for every two electrons transferred, four hydrogen ions are translocated across the cytoplasmic membrane), and thus conserves the redox energy in a proton gradient. The sequence is that of NADH-quinone oxidoreductase subunit C from Mycolicibacterium paratuberculosis (strain ATCC BAA-968 / K-10) (Mycobacterium paratuberculosis).